The following is a 239-amino-acid chain: tRNA (guanine-N(7)-)-methyltransferase (239 aa).

Glutamate 69, glutamate 94, aspartate 121, and aspartate 144 together coordinate S-adenosyl-L-methionine. Aspartate 144 is an active-site residue. Residue lysine 148 participates in substrate binding. Residues 150–155 (RHNKRR) form an interaction with RNA region. Residues aspartate 180 and 217–220 (TKFE) contribute to the substrate site.

Belongs to the class I-like SAM-binding methyltransferase superfamily. TrmB family. Monomer.

The enzyme catalyses guanosine(46) in tRNA + S-adenosyl-L-methionine = N(7)-methylguanosine(46) in tRNA + S-adenosyl-L-homocysteine. It participates in tRNA modification; N(7)-methylguanine-tRNA biosynthesis. In terms of biological role, catalyzes the formation of N(7)-methylguanine at position 46 (m7G46) in tRNA. In Shigella dysenteriae serotype 1 (strain Sd197), this protein is tRNA (guanine-N(7)-)-methyltransferase.